A 738-amino-acid chain; its full sequence is Pentatricopeptide repeat-containing protein At5g65570 (738 aa).

PPR repeat units lie at residues 98–128, 129–163, 164–198, 200–230, 231–265, 266–300, 301–331, 332–366, 367–401, 402–432, 433–467, 468–502, and 503–537; these read AEIS…MSER, HIVT…NVLP, DEYT…GLEV, NVFV…VEEK, DVVL…KVQP, NEYT…GFES, ALAS…IEYP, NQVS…SIKP, NSFT…GFDR, DKYA…LSEV, DVIS…GLQP, NDVT…KIML, and TNDH…DLVL. The segment at 537–612 is type E motif; sequence LWRTLLSACK…NPAMSWVEIN (76 aa). Positions 613–644 are type E(+) motif; that stretch reads KETHTFMAGDLFSHPNSEQILENLEELIKKSK. The interval 645–738 is type DYW motif; the sequence is DLGYVEDKSC…DGSCSCGDYW (94 aa).

It belongs to the PPR family. PCMP-H subfamily.

The chain is Pentatricopeptide repeat-containing protein At5g65570 (PCMP-H47) from Arabidopsis thaliana (Mouse-ear cress).